The following is a 123-amino-acid chain: Large ribosomal subunit protein uL18 (123 aa).

The protein belongs to the universal ribosomal protein uL18 family. As to quaternary structure, part of the 50S ribosomal subunit; part of the 5S rRNA/L5/L18/L25 subcomplex. Contacts the 5S and 23S rRNAs.

Functionally, this is one of the proteins that bind and probably mediate the attachment of the 5S RNA into the large ribosomal subunit, where it forms part of the central protuberance. The polypeptide is Large ribosomal subunit protein uL18 (Wolbachia pipientis wMel).